Reading from the N-terminus, the 360-residue chain is Phospho-N-acetylmuramoyl-pentapeptide-transferase (360 aa).

Helical transmembrane passes span 21–41 (YVTFRAILGLLTAMVFSLWWG), 74–94 (MGGLLILAGVFISVLLWGDLG), 97–117 (YVWVMLFVLGAFGLIGFIDDY), 134–154 (YILQSLAALAIAFYLYASAGS), 168–188 (VMPQLGAFFILLAYFTIVGSS), 199–219 (GLAIMPTVMVAAAFALIAYLS), 236–256 (SGELVIVCTAIVGAGLGFLWF), 263–283 (VFMGDVGSLSLGAALGTIAVL), 288–308 (ILLVIMGGVFVMETVSVILQV), and 338–358 (VIVRFWIISLFLVLLGLATLK).

Belongs to the glycosyltransferase 4 family. MraY subfamily. It depends on Mg(2+) as a cofactor.

It is found in the cell inner membrane. It carries out the reaction UDP-N-acetyl-alpha-D-muramoyl-L-alanyl-gamma-D-glutamyl-meso-2,6-diaminopimeloyl-D-alanyl-D-alanine + di-trans,octa-cis-undecaprenyl phosphate = di-trans,octa-cis-undecaprenyl diphospho-N-acetyl-alpha-D-muramoyl-L-alanyl-D-glutamyl-meso-2,6-diaminopimeloyl-D-alanyl-D-alanine + UMP. The protein operates within cell wall biogenesis; peptidoglycan biosynthesis. Catalyzes the initial step of the lipid cycle reactions in the biosynthesis of the cell wall peptidoglycan: transfers peptidoglycan precursor phospho-MurNAc-pentapeptide from UDP-MurNAc-pentapeptide onto the lipid carrier undecaprenyl phosphate, yielding undecaprenyl-pyrophosphoryl-MurNAc-pentapeptide, known as lipid I. In Shewanella loihica (strain ATCC BAA-1088 / PV-4), this protein is Phospho-N-acetylmuramoyl-pentapeptide-transferase.